The sequence spans 132 residues: Small ribosomal subunit protein uS17c (132 aa).

Low complexity predominate over residues 1 to 11 (MLLLSSPFVSV). Disordered regions lie at residues 1–23 (MLLL…SHGA) and 104–132 (PLPP…SSRE). Residues 1 to 31 (MLLLSSPFVSVSPPPPPLSSHGARPALRIEA) constitute a chloroplast transit peptide. The segment covering 122-132 (SDDDQEPSSRE) has biased composition (acidic residues).

This sequence belongs to the universal ribosomal protein uS17 family. Part of the 30S ribosomal subunit.

The protein resides in the plastid. The protein localises to the chloroplast. Functionally, one of the primary rRNA binding proteins, it binds specifically to the 5'-end of 16S ribosomal RNA. Its function is as follows. In the hcf60 mutation the Activator tag is inserted 17 base pars upstream of the initiation codon. This mutation is seedling lethal, due to plastid ribosome insufficiency. However under non-light stressed conditions photosynthesis and oxygen evolution can occur. The polypeptide is Small ribosomal subunit protein uS17c (RPS17) (Zea mays (Maize)).